Consider the following 144-residue polypeptide: Large ribosomal subunit protein uL13 (144 aa).

The protein belongs to the universal ribosomal protein uL13 family. In terms of assembly, part of the 50S ribosomal subunit.

Functionally, this protein is one of the early assembly proteins of the 50S ribosomal subunit, although it is not seen to bind rRNA by itself. It is important during the early stages of 50S assembly. This chain is Large ribosomal subunit protein uL13, found in Nitrosomonas eutropha (strain DSM 101675 / C91 / Nm57).